Consider the following 486-residue polypeptide: Cardiolipin synthase A (486 aa).

2 helical membrane passes run 3–23 (TFYTVLSWLTFFFYWLLIAGV) and 38–58 (MTWLLIIYILPLVGVIAYFAF). 2 PLD phosphodiesterase domains span residues 219–246 (MDLRQHRKIVLIDNYISYTGSMNMVDPR) and 399–426 (EDGLLHTKSVMVDGQLSMVGSVNLDMRS). Active-site residues include His-224, Lys-226, Asp-231, His-404, Lys-406, and Asp-411.

The protein belongs to the phospholipase D family. Cardiolipin synthase subfamily. ClsA sub-subfamily.

The protein resides in the cell inner membrane. It catalyses the reaction 2 a 1,2-diacyl-sn-glycero-3-phospho-(1'-sn-glycerol) = a cardiolipin + glycerol. Catalyzes the reversible phosphatidyl group transfer from one phosphatidylglycerol molecule to another to form cardiolipin (CL) (diphosphatidylglycerol) and glycerol. The protein is Cardiolipin synthase A of Proteus mirabilis (strain HI4320).